The sequence spans 449 residues: MREVISLNVGQAGCQIANSCWELYCLEHGIQPDGYLTEERKKEDPDHGFSTFFSETGQGKYVPRTIYADLEPNVVDEVRTGTYRSLFHPENLITGKEDASNNYARGHYTVGKEMIDQVLDKVRRMADSCSGLQGFLVFHSFGGGTGSGFGALLMERLSVDYGKKSKLEFCVYPAPQNATSVVEPYNSILTTHTTLEHSDCSFMVDNEAIYDICRRNLGIERPSYENLNRLIAQVVSSITASLRFDGSLNVDLNEFQTNLVPYPRIHFPLVAYSPVISADKASHEANSVQDITMSCFEPNNQMVKCDPRNGKYMATCLLYRGDVVPKETHAAVATLKTKRTIQFVDWCPTGFKIGICYQPPQQVPNGDLAKVNRAVCMLSNTTAISEAWSALDHKFDLMYSKRAFVHWYVGEGMEEGEFSEAREDLAALERDYEEVASDSLEEEGEEVEY.

8 residues coordinate GTP: Gln11, Glu71, Ser140, Gly144, Thr145, Thr179, Asn206, and Asn228. Residue Glu71 coordinates Mg(2+). The active site involves Glu254.

It belongs to the tubulin family. Dimer of alpha and beta chains. A typical microtubule is a hollow water-filled tube with an outer diameter of 25 nm and an inner diameter of 15 nM. Alpha-beta heterodimers associate head-to-tail to form protofilaments running lengthwise along the microtubule wall with the beta-tubulin subunit facing the microtubule plus end conferring a structural polarity. Microtubules usually have 13 protofilaments but different protofilament numbers can be found in some organisms and specialized cells. The cofactor is Mg(2+).

Its subcellular location is the cytoplasm. It is found in the cytoskeleton. It catalyses the reaction GTP + H2O = GDP + phosphate + H(+). Functionally, tubulin is the major constituent of microtubules, a cylinder consisting of laterally associated linear protofilaments composed of alpha- and beta-tubulin heterodimers. Microtubules grow by the addition of GTP-tubulin dimers to the microtubule end, where a stabilizing cap forms. Below the cap, tubulin dimers are in GDP-bound state, owing to GTPase activity of alpha-tubulin. This Emericella nidulans (strain FGSC A4 / ATCC 38163 / CBS 112.46 / NRRL 194 / M139) (Aspergillus nidulans) protein is Tubulin alpha-1 chain (tubA).